Here is a 447-residue protein sequence, read N- to C-terminus: UDP-glycosyltransferase 79B10 (447 aa).

Residues Ser260, 319–321 (VQQ), 336–344 (HCGFGSMWE), and 358–361 (LADQ) contribute to the UDP-alpha-D-glucose site.

The protein belongs to the UDP-glycosyltransferase family.

The chain is UDP-glycosyltransferase 79B10 (UGT79B10) from Arabidopsis thaliana (Mouse-ear cress).